The following is a 506-amino-acid chain: Bifunctional purine biosynthesis protein PurH (506 aa).

Residues 1 to 142 (MRAIISVYRK…KNFFRVVILV (142 aa)) enclose the MGS-like domain.

Belongs to the PurH family.

The enzyme catalyses (6R)-10-formyltetrahydrofolate + 5-amino-1-(5-phospho-beta-D-ribosyl)imidazole-4-carboxamide = 5-formamido-1-(5-phospho-D-ribosyl)imidazole-4-carboxamide + (6S)-5,6,7,8-tetrahydrofolate. The catalysed reaction is IMP + H2O = 5-formamido-1-(5-phospho-D-ribosyl)imidazole-4-carboxamide. The protein operates within purine metabolism; IMP biosynthesis via de novo pathway; 5-formamido-1-(5-phospho-D-ribosyl)imidazole-4-carboxamide from 5-amino-1-(5-phospho-D-ribosyl)imidazole-4-carboxamide (10-formyl THF route): step 1/1. It functions in the pathway purine metabolism; IMP biosynthesis via de novo pathway; IMP from 5-formamido-1-(5-phospho-D-ribosyl)imidazole-4-carboxamide: step 1/1. The protein is Bifunctional purine biosynthesis protein PurH of Aquifex aeolicus (strain VF5).